A 136-amino-acid polypeptide reads, in one-letter code: Large ribosomal subunit protein uL13 (136 aa).

Belongs to the universal ribosomal protein uL13 family. As to quaternary structure, part of the 50S ribosomal subunit.

This protein is one of the early assembly proteins of the 50S ribosomal subunit, although it is not seen to bind rRNA by itself. It is important during the early stages of 50S assembly. The chain is Large ribosomal subunit protein uL13 from Thermoplasma acidophilum (strain ATCC 25905 / DSM 1728 / JCM 9062 / NBRC 15155 / AMRC-C165).